A 593-amino-acid chain; its full sequence is Insulin-like growth factor 2 mRNA-binding protein 3-B (593 aa).

2 consecutive RRM domains span residues 2-75 (NKLY…HSVP) and 81-156 (RKLQ…YIPD). The segment at 159-208 (ATPQSPSQQLQQPQQQHPQGRRGFGQRGPARQGSPGAAARPKPQSEVPLR) is disordered. Low complexity predominate over residues 161–176 (PQSPSQQLQQPQQQHP). 2 KH domains span residues 204-269 (EVPL…CKII) and 285-352 (EIPL…EEEV). Low complexity predominate over residues 390-402 (SGMPPPSAGVSSP). Residues 390–412 (SGMPPPSAGVSSPTTSASYPPFG) form a disordered region. 2 consecutive KH domains span residues 417–482 (SETV…QGRI) and 499–565 (KLEA…QRKI). Residues 571-593 (QVRRQQQQQQKTAQSGQPQPRRK) form a disordered region.

This sequence belongs to the RRM IMP/VICKZ family. As to quaternary structure, homodimer and multimer. Associates with microtubules. Interaction with a translocation machinery protein TRAPA of the endoplasmic reticulum. Component of a mRNP complex, at least composed of DAZAP1, IGF2BP3, STAU and VgRBP60. The mRNP complex with DAZAP1, IGF2BP3, STAU and VgRBP60 is only found in the cytoplasm. Interacts with a hnRNP 1 related RNA transport protein VgRBP60 both in the nucleus (in an RNA-independent manner) and the cytoplasm (in an RNA-dependent manner). Found in a B3 activator complex. As to expression, expressed in oocytes, kidney and pancreas (at protein level). Expressed in oocytes, kidney and pancreas.

It is found in the nucleus. The protein resides in the cytoplasm. The protein localises to the endoplasmic reticulum. Functionally, RNA-binding protein that acts as a regulator of mRNA transport and localization. Binds to the RNA sequence motif 5'-UUCAC-3'. Preferentially binds to N6-methyladenosine (m6A)-containing mRNAs and increases their stability. Mediates the specific association of Vg1 RNA to microtubules. May regulate mRNA translation. Binds specifically to the vegetal localization elements (VLE or VgLE) in the 3'-UTR of Vg1 and VegT mRNAs. Binds to the Vg1 and VegT mRNAs in both the nucleus and the cytoplasm. May regulate mRNA translation. Acts as a transcription regulator. Binds to the 5'-[TA]GGTTACT-3' motif within element 3 of the TFIIIA gene promoter. In Xenopus laevis (African clawed frog), this protein is Insulin-like growth factor 2 mRNA-binding protein 3-B (igf2bp3-b).